The chain runs to 309 residues: RuBisCO operon transcriptional regulator (309 aa).

The region spanning 6-63 (ATLHQLKIFAAVARHMSFARAAEELHLTPPALSIQVRQLAEAVGQPLFDQIGKKIYLT) is the HTH lysR-type domain. Positions 23-42 (FARAAEELHLTPPALSIQVR) form a DNA-binding region, H-T-H motif.

Belongs to the LysR transcriptional regulatory family.

Its function is as follows. Trans-acting transcriptional regulator of RuBisCO genes (rbcL1S1) expression. The sequence is that of RuBisCO operon transcriptional regulator (rbcR) from Acidithiobacillus ferrooxidans (Thiobacillus ferrooxidans).